We begin with the raw amino-acid sequence, 959 residues long: Protein SEY1 homolog 1 (959 aa).

Residues 1-767 (MQESDVFHNQ…ELAAITVHSK (767 aa)) are Cytoplasmic-facing. Residues 9–86 (NQLRVEMLKK…EEEKKEKENY (78 aa)) are a coiled coil. The segment at 62–81 (EEKENMKVEEEEIKEEEEKK) is disordered. In terms of domain architecture, GB1/RHD3-type G spans 123–340 (GFNYNMLSIL…NQNTYFRPIY (218 aa)). 133 to 140 (GPQNSGKS) is a GTP binding site. The helical transmembrane segment at 768 to 788 (TPMWLILLIAFLSFDNIVYVF) threads the bilayer. Residues 789 to 791 (KSP) lie on the Lumenal side of the membrane. The chain crosses the membrane as a helical span at residues 792–812 (TLLALTLIIIGIIYSLNKIGY). At 813-959 (AYLIDSVISY…LNKIKEANEF (147 aa)) the chain is on the cytoplasmic side. Positions 849 to 868 (EAPKRKRPQKKTQDDKPKSS) are disordered.

It belongs to the TRAFAC class dynamin-like GTPase superfamily. GB1/RHD3 GTPase family. RHD3 subfamily.

The protein localises to the endoplasmic reticulum membrane. Its function is as follows. Probable GTP-binding protein that may be involved in cell development. The protein is Protein SEY1 homolog 1 of Entamoeba histolytica (strain ATCC 30459 / HM-1:IMSS / ABRM).